The sequence spans 692 residues: Small conductance calcium-activated potassium channel-like protein 3 (692 aa).

Residues 270–290 traverse the membrane as a helical segment; sequence SLYLALFGVILMLVESEITAE. Residues 313 to 333 form a helical membrane-spanning segment; it reads TIALLYHIILYHLNDIVLELV. The helical transmembrane segment at 349 to 369 threads the bilayer; the sequence is VIQFCIEFICCGICPLPGSGE. Residues 401–421 form a helical membrane-spanning segment; that stretch reads VILSCFMLCRSYLFARFMVLH. The chain crosses the membrane as a helical span at residues 455 to 475; sequence PVLFLTTFTFIFWIIMSWMFV. The segment at residues 492-512 is an intramembrane region (pore-forming); sequence YSNSLWFIAITFMLNGYGDIV. A helical transmembrane segment spans residues 520-540; the sequence is FIAIFVGVVGAVISSILIAVI. Positions 667–683 are enriched in polar residues; it reads HSTPNVPHLQGLTSSPV. A disordered region spans residues 667-692; that stretch reads HSTPNVPHLQGLTSSPVPSDRYDNRF.

It belongs to the potassium channel KCNN family. SK subfamily. In terms of assembly, heterooligomer.

It localises to the membrane. In terms of biological role, forms a voltage-independent potassium channel activated by intracellular calcium. The sequence is that of Small conductance calcium-activated potassium channel-like protein 3 (kcnl-3) from Caenorhabditis elegans.